The sequence spans 184 residues: MKRQSEWIRVESIRGARRISNFFWAFILILGALGFLLVGSSSYLGRDLIPLLPSQQIVFIPQGIVMCFYGIAGISIGFYLGFAISWDIGNGYNLFDKQRGIVRIFRWGFPGENRRICIQFFMKDIQAIGLEIREGFYSRRIIYMRMKGQQKIFLTHISENSTLKEMEEKAANLARFMCVSIEGI.

The next 2 membrane-spanning stretches (helical) occupy residues 21–43 and 58–80; these read NFFWAFILILGALGFLLVGSSSY and VFIPQGIVMCFYGIAGISIGFYL.

The protein belongs to the Ycf4 family.

The protein localises to the plastid. It is found in the chloroplast thylakoid membrane. In terms of biological role, seems to be required for the assembly of the photosystem I complex. The polypeptide is Photosystem I assembly protein Ycf4 (Psilotum nudum (Whisk fern)).